The primary structure comprises 100 residues: Osteocalcin (100 aa).

An N-terminal signal peptide occupies residues 1 to 23 (MRALTLLALLALAALCIAGQAGA). Positions 24-51 (KPSGAESSKGAAFVSKQEGSEVVKRPRR) are excised as a propeptide. The 47-residue stretch at 52 to 98 (YLYQWLGAPVPYPDPLEPRREVCELNPDCDELADHIGFQEAYRRFYG) folds into the Gla domain. Residues E68, E72, E75, and D81 each coordinate Ca(2+). 4-carboxyglutamate; partial is present on E68. Residues E72 and E75 each carry the 4-carboxyglutamate modification. A disulfide bond links C74 and C80.

It belongs to the osteocalcin/matrix Gla protein family. In terms of processing, gamma-carboxyglutamate residues are formed by vitamin K dependent carboxylation by GGCX. These residues are essential for the binding of calcium. Decarboxylation promotes the hormone activity.

Its subcellular location is the secreted. Its function is as follows. Bone protein that constitutes 1-2% of the total bone protein, and which acts as a negative regulator of bone formation. Functions to limit bone formation without impairing bone resorption or mineralization. It binds strongly to apatite and calcium. In terms of biological role, the uncarboxylated form acts as a hormone secreted by osteoblasts, which regulates different cellular processes, such as energy metabolism, male fertility and brain development. Regulates of energy metabolism by acting as a hormone favoring pancreatic beta-cell proliferation, insulin secretion and sensitivity and energy expenditure. Uncarboxylated osteocalcin hormone also promotes testosterone production in the testes: acts as a ligand for G protein-coupled receptor GPRC6A at the surface of Leydig cells, initiating a signaling response that promotes the expression of enzymes required for testosterone synthesis in a CREB-dependent manner. Also acts as a regulator of brain development: osteocalcin hormone crosses the blood-brain barrier and acts as a ligand for GPR158 on neurons, initiating a signaling response that prevents neuronal apoptosis in the hippocampus, favors the synthesis of all monoamine neurotransmitters and inhibits that of gamma-aminobutyric acid (GABA). Osteocalcin also crosses the placenta during pregnancy and maternal osteocalcin is required for fetal brain development. The protein is Osteocalcin (BGLAP) of Homo sapiens (Human).